A 412-amino-acid polypeptide reads, in one-letter code: L-cysteine:1D-myo-inositol 2-amino-2-deoxy-alpha-D-glucopyranoside ligase (412 aa).

C43 contributes to the Zn(2+) binding site. L-cysteinyl-5'-AMP contacts are provided by residues 43-46 (CGIT), T58, and 81-83 (NVT). The 'HIGH' region motif lies at 45 to 55 (ITPYDATHLGH). The 'ERGGDP' region signature appears at 187–192 (ERGGDP). An L-cysteinyl-5'-AMP-binding site is contributed by W227. C231 provides a ligand contact to Zn(2+). An L-cysteinyl-5'-AMP-binding site is contributed by 249–251 (GSD). H256 is a Zn(2+) binding site. I283 contributes to the L-cysteinyl-5'-AMP binding site. Residues 289-293 (KMSKS) carry the 'KMSKS' region motif.

It belongs to the class-I aminoacyl-tRNA synthetase family. MshC subfamily. In terms of assembly, monomer. Zn(2+) is required as a cofactor.

It catalyses the reaction 1D-myo-inositol 2-amino-2-deoxy-alpha-D-glucopyranoside + L-cysteine + ATP = 1D-myo-inositol 2-(L-cysteinylamino)-2-deoxy-alpha-D-glucopyranoside + AMP + diphosphate + H(+). In terms of biological role, catalyzes the ATP-dependent condensation of GlcN-Ins and L-cysteine to form L-Cys-GlcN-Ins. The sequence is that of L-cysteine:1D-myo-inositol 2-amino-2-deoxy-alpha-D-glucopyranoside ligase (mshC) from Mycolicibacterium smegmatis (strain ATCC 700084 / mc(2)155) (Mycobacterium smegmatis).